The primary structure comprises 619 residues: E3 ubiquitin-protein ligase complex SLX5-SLX8 subunit SLX5 (619 aa).

Positions 1–23 are disordered; sequence MHSDTNGRTKSNNSPSDNNPNET. Low complexity predominate over residues 11 to 21; that stretch reads SNNSPSDNNPN. Phosphoserine occurs at positions 14 and 29. Positions 63–90 are disordered; the sequence is VRSDSRSRNSQRTHITASSERPDFQANN. Residues 70–90 show a composition bias toward polar residues; it reads RNSQRTHITASSERPDFQANN. Residues 201 to 335 are EUC1 interaction domain; it reads SRRQLLRRSA…ALFTEFRNQL (135 aa).

In terms of assembly, component of the heterodimeric SUMO-targeted ubiquitin ligase (STUbL) complex composed of SLX5 and SLX8. Interacts with sirtuin SIR2. Interacts with KAR9. Interacts with EUC1.

Its subcellular location is the nucleus. It localises to the chromosome. The protein localises to the centromere. It is found in the kinetochore. It catalyses the reaction S-ubiquitinyl-[E2 ubiquitin-conjugating enzyme]-L-cysteine + [acceptor protein]-L-lysine = [E2 ubiquitin-conjugating enzyme]-L-cysteine + N(6)-ubiquitinyl-[acceptor protein]-L-lysine.. It functions in the pathway protein modification; protein ubiquitination. Its function is as follows. Component of the SUMO-targeted ubiquitin ligase (STUbL) complex SLX5/SLX8 that mediates ubiquitination and subsequent desumoylation of sumoylated proteins and proteins containing SUMO-like domains for their degradation. The STUbL complex SLX5/SLX8 stimulates ubiquitin conjugating enzymes, including UBC1, UBC4, UBC5 and UBC13-MMS2, and mediates the proteolytic down-regulation of sumoylated proteins. The STUbL complex SLX5/SLX8 is involved in ubiquitin-mediated degradation of histone variant CSE4, preventing mislocalization to euchromatin. The complex plays an essential role in maintenance of chromosome stability and links SUMO-dependent ubiquitination to a centromere-specific function during mitosis. The complex is involved in proteolysis of spindle positioning protein KAR9 and ensures correct spindle function by regulating levels of microtubule-associated proteins. During replication, the complex helps prevent DNA lesions via recombination and has a role in localizing the DNA damage protein DCD2. The complex especially ubiquitinates the nuclease YEN1 and prevents persistent accumulation of a fraction of YEN1 associated with sites of activity in late G2/M and helps maintain the balance between pro- and anti-crossover pathways during homologous recombination. It is also involved in ubiquitin-mediated degradation of DNA repair proteins RAD52 and RAD57. Along with SIR2, promotes silencing of genes at telomeric or ribosomal DNA (rDNA) loci. Finally, the complex is recruited to distinct genomic hotspots of non-H2B protein ubiquitination (ub-hotspots) by the sumoylated transcription factor-like protein EUC1 where it ubiquitinates EUC1 and presumably other targets. The sequence is that of E3 ubiquitin-protein ligase complex SLX5-SLX8 subunit SLX5 (SLX5) from Saccharomyces cerevisiae (strain ATCC 204508 / S288c) (Baker's yeast).